We begin with the raw amino-acid sequence, 263 residues long: uncharacterized protein (263 aa).

This is an uncharacterized protein from Archaeoglobus fulgidus (strain ATCC 49558 / DSM 4304 / JCM 9628 / NBRC 100126 / VC-16).